A 309-amino-acid polypeptide reads, in one-letter code: Tagatose-6-phosphate kinase (309 aa).

It belongs to the carbohydrate kinase PfkB family. LacC subfamily.

It carries out the reaction D-tagatofuranose 6-phosphate + ATP = D-tagatofuranose 1,6-bisphosphate + ADP + H(+). Its pathway is carbohydrate metabolism; D-tagatose 6-phosphate degradation; D-glyceraldehyde 3-phosphate and glycerone phosphate from D-tagatose 6-phosphate: step 1/2. This is Tagatose-6-phosphate kinase from Streptococcus pneumoniae (strain 70585).